Consider the following 612-residue polypeptide: Putative pentatricopeptide repeat-containing protein At5g40405 (612 aa).

PPR repeat units lie at residues 70–104, 107–141, 142–172, 173–203, 204–238, 239–273, 274–304, 305–339, 340–375, and 376–410; these read TLFA…GNDL, DNYT…GFDN, DPHV…IPCP, DFVC…MPER, DPIA…GVKV, NGVA…KIKI, TVRL…MEEK, NVYT…GVTP, NAVT…GIEP, and QLEH…PHAA. Residues 411–486 form a type E motif region; it reads VWSSLLHASR…QPGCSVMEVN (76 aa). The tract at residues 487-517 is type E(+) motif; sequence GEVHEFFVGDKSHPKYTQIDAVWKDISRRLR. The type DYW motif stretch occupies residues 518–612; the sequence is LAGYKADTTP…DGHCSCNGFW (95 aa).

This sequence belongs to the PPR family. PCMP-H subfamily.

The protein is Putative pentatricopeptide repeat-containing protein At5g40405 (PCMP-H14) of Arabidopsis thaliana (Mouse-ear cress).